The primary structure comprises 74 residues: MGSIGMTELLLIFGIIVLLFGAKKLPEIGRGLGEGIRSFKSAISGEEKKEDEKVVTPKEIEAEVIKKEKVKENA.

The chain crosses the membrane as a helical span at residues 1-21; it reads MGSIGMTELLLIFGIIVLLFG.

This sequence belongs to the TatA/E family. Forms a complex with TatC.

It localises to the cell inner membrane. Functionally, part of the twin-arginine translocation (Tat) system that transports large folded proteins containing a characteristic twin-arginine motif in their signal peptide across membranes. TatA could form the protein-conducting channel of the Tat system. The chain is Sec-independent protein translocase protein TatA from Sulfurihydrogenibium sp. (strain YO3AOP1).